The sequence spans 91 residues: uncharacterized protein (91 aa).

Residues 1 to 18 (MKVNLILFSLFLLVSIMA) form the signal peptide. Residue cysteine 19 is the site of N-palmitoyl cysteine attachment. Cysteine 19 carries S-diacylglycerol cysteine lipidation.

The protein resides in the cell membrane. This is an uncharacterized protein from Escherichia coli (strain K12).